Reading from the N-terminus, the 239-residue chain is Norbelladine 4'-O-methyltransferase 4 (239 aa).

Residues valine 55, glutamate 77, glycine 79–valine 80, serine 85, aspartate 103, and alanine 132 each bind S-adenosyl-L-methionine. Aspartate 155 lines the a divalent metal cation pocket. Aspartate 157 provides a ligand contact to S-adenosyl-L-methionine. A divalent metal cation-binding residues include aspartate 181 and asparagine 182.

It belongs to the class I-like SAM-binding methyltransferase superfamily. Cation-dependent O-methyltransferase family. Mg(2+) is required as a cofactor.

It catalyses the reaction norbelladine + S-adenosyl-L-methionine = 4'-O-methylnorbelladine + S-adenosyl-L-homocysteine + H(+). The protein operates within alkaloid biosynthesis. Functionally, 4'-O-methyltransferase converting norbelladine to 4'-O-methylnorbelladine. 4'-O-methylnorbelladine is a precursor to all Amaryllidaceae alkaloids such as galanthamine, lycorine and haemanthamine, and including haemanthamine- and crinamine-type alkaloids, promising anticancer agents. This Narcissus aff. pseudonarcissus MK-2014 (Daffodil) protein is Norbelladine 4'-O-methyltransferase 4.